The sequence spans 1445 residues: Protein HUA2-LIKE 1 (1445 aa).

The 58-residue stretch at 20–77 folds into the PWWP domain; that stretch reads LGDLVLAKVKGFPAWPAKIGQPEDWNQAPDPKKHFVQFYGTGEIGFVTPPDIQPFTSE. Disordered stretches follow at residues 133-197, 211-302, 319-356, 409-439, 460-491, 641-685, and 797-835; these read KYLN…SPDP, TCTD…DLNI, FENELGKSASGADESKRAAKRPRSEDAKDQKQCKSKRL, EHTSVSSFPGSLVKEGANHPEQKISSSSDSD, DDDDEDPKTPVHGGLSNIPIASTDAPKSANAS, GIPK…TSTP, and LTPSNHGRQSSSSNQAGTEENEERRFSSGHRSVGGSLSG. 2 stretches are compositionally biased toward polar residues: residues 173–187 and 211–225; these read QDSSISNNRNTSPSS and TCTDHSDGTGNNLVN. 3 stretches are compositionally biased toward basic and acidic residues: residues 228-257, 274-293, and 331-350; these read RIIRKTTDDSNKRCKDEVRAKRVPDSRAAT, GQDHGSKKGQDHGCRKESSD, and DESKRAAKRPRSEDAKDQKQ. Polar residues-rich tracts occupy residues 660–673 and 797–814; these read RVSSSHSQTANQRS and LTPSNHGRQSSSSNQAGT. A CID domain is found at 838 to 979; the sequence is EAAISRDTFE…RYIGDLGASG (142 aa). The interval 1110 to 1203 is disordered; the sequence is PATTCATELP…SLPLQPGFAP (94 aa). Positions 1124–1170 are enriched in pro residues; sequence GSPPLPHESPPSPPPQPPSSPPPPSSPPQLAPAPPPSDHCLPPPTAP.

Expressed throughout young primordia, and vegetative and reproductive apices.

The protein localises to the nucleus. Probable transcription factor that acts with partial redundancy with HULK2 and HULK3. Plays diverse and essential roles in the control of plant development, physiology and flowering time. The polypeptide is Protein HUA2-LIKE 1 (Arabidopsis thaliana (Mouse-ear cress)).